The chain runs to 65 residues: Cytochrome b-c1 complex subunit 9, mitochondrial (65 aa).

The helical transmembrane segment at 14-34 (IYVATIFGGAFAFQGFFDVAV) threads the bilayer.

The protein belongs to the UQCR10/QCR9 family. As to quaternary structure, component of the ubiquinol-cytochrome c oxidoreductase (cytochrome b-c1 complex, complex III, CIII), a multisubunit enzyme composed of 10 subunits. The complex is composed of 3 respiratory subunits cytochrome b (COB), cytochrome c1 (CYT1) and Rieske protein (RIP1), 2 core protein subunits COR1 and QCR2, and 5 low-molecular weight protein subunits QCR6, QCR7, QCR8, QCR9 and QCR10. The complex exists as an obligatory dimer and forms supercomplexes (SCs) in the inner mitochondrial membrane with a monomer or a dimer of cytochrome c oxidase (complex IV, CIV), resulting in 2 different assemblies (supercomplexes III(2)IV and III(2)IV(2)).

It localises to the membrane. The protein resides in the mitochondrion inner membrane. Its function is as follows. Component of the ubiquinol-cytochrome c oxidoreductase, a multisubunit transmembrane complex that is part of the mitochondrial electron transport chain which drives oxidative phosphorylation. The complex plays an important role in the uptake of multiple carbon sources present in different host niches. In Candida albicans (strain SC5314 / ATCC MYA-2876) (Yeast), this protein is Cytochrome b-c1 complex subunit 9, mitochondrial.